A 335-amino-acid polypeptide reads, in one-letter code: Beta-hexosaminidase (335 aa).

Residues Asp-60, Arg-68, Arg-133, and 163 to 164 (KH) contribute to the substrate site. His-176 acts as the Proton donor/acceptor in catalysis. Catalysis depends on Asp-247, which acts as the Nucleophile.

It belongs to the glycosyl hydrolase 3 family. NagZ subfamily. Monomer.

It localises to the cytoplasm. The catalysed reaction is Hydrolysis of terminal non-reducing N-acetyl-D-hexosamine residues in N-acetyl-beta-D-hexosaminides.. The protein operates within cell wall biogenesis; peptidoglycan recycling. Functionally, plays a role in peptidoglycan recycling by cleaving the terminal beta-1,4-linked N-acetylglucosamine (GlcNAc) from peptide-linked peptidoglycan fragments, giving rise to free GlcNAc, anhydro-N-acetylmuramic acid and anhydro-N-acetylmuramic acid-linked peptides. The chain is Beta-hexosaminidase from Xylella fastidiosa (strain 9a5c).